The chain runs to 317 residues: SWI/SNF-related matrix-associated actin-dependent regulator of chromatin subfamily E member 1-related (317 aa).

The span at 1–22 (MSHGPKQPGAASAPASGKAPGQ) shows a compositional bias: low complexity. Positions 1 to 71 (MSHGPKQPGA…RKKILPNGPK (71 aa)) are disordered. Residue lysine 31 forms a Glycyl lysine isopeptide (Lys-Gly) (interchain with G-Cter in SUMO2) linkage. The segment covering 31–52 (KQERGEGPRAGEKGSHEEEPVK) has biased composition (basic and acidic residues). The span at 53–65 (KRGWPKGKKRKKI) shows a compositional bias: basic residues. A DNA-binding region (HMG box) is located at residues 70 to 138 (PKAPVTGYVR…QYMKELRAYQ (69 aa)). Serine 160 bears the Phosphoserine mark. Residues 190–257 (EEFLDQNKAR…LQQQLQAVRQ (68 aa)) are a coiled coil.

As to quaternary structure, component of a BHC histone deacetylase complex that contains HDAC1, HDAC2, HMG20B/BRAF35, KDM1A, RCOR1/CoREST and PHF21A/BHC80. The BHC complex may also contain ZMYM2, ZNF217, ZMYM3, GSE1 and GTF2I. Interacts with the BRCA2 tumor suppressor protein.

It localises to the nucleus. Its subcellular location is the chromosome. Required for correct progression through G2 phase of the cell cycle and entry into mitosis. Required for RCOR1/CoREST mediated repression of neuronal specific gene promoters. This is SWI/SNF-related matrix-associated actin-dependent regulator of chromatin subfamily E member 1-related (HMG20B) from Bos taurus (Bovine).